Consider the following 262-residue polypeptide: MTSEAVFIQVGALADGFAPHGNLLATASLPAGENFTFYVAGSEPQQLVIEDEQTLSWNGKRAPWRATALRPDILFIDFLDPERDNASISAVCNLTQRNATLVYGQLPDEAPRAGRLQPGRTRVALTAVEVRFVFARLDAQPGPLPGFTDALIGMRNQYTYSPTERYEHIYLNDNFYAWQCLDGVEKGLADVDRCHYVQVAEDLYLFVWREKIIPTLGVILIDLQQMRTDGKIMGYQGSDFGALSNFPVGATAKILNVTRHQE.

The propeptide occupies 1-13; it reads MTSEAVFIQVGAL.

The protein is Protein MoaF (moaF) of Klebsiella aerogenes (Enterobacter aerogenes).